The sequence spans 206 residues: FMN-dependent NADH:quinone oxidoreductase (206 aa).

Residues S9, 15 to 17, and 139 to 142 contribute to the FMN site; these read SVS and SRGG.

It belongs to the azoreductase type 1 family. Homodimer. FMN is required as a cofactor.

It catalyses the reaction 2 a quinone + NADH + H(+) = 2 a 1,4-benzosemiquinone + NAD(+). The catalysed reaction is N,N-dimethyl-1,4-phenylenediamine + anthranilate + 2 NAD(+) = 2-(4-dimethylaminophenyl)diazenylbenzoate + 2 NADH + 2 H(+). Functionally, quinone reductase that provides resistance to thiol-specific stress caused by electrophilic quinones. Also exhibits azoreductase activity. Catalyzes the reductive cleavage of the azo bond in aromatic azo compounds to the corresponding amines. The polypeptide is FMN-dependent NADH:quinone oxidoreductase (Cupriavidus necator (strain ATCC 17699 / DSM 428 / KCTC 22496 / NCIMB 10442 / H16 / Stanier 337) (Ralstonia eutropha)).